A 344-amino-acid polypeptide reads, in one-letter code: Tripartite motif-containing protein 44 (344 aa).

The interval 69–165 is disordered; sequence PPASGDDALP…ETEAESEFDP (97 aa). A compositionally biased stretch (acidic residues) spans 88 to 165; the sequence is EGEVESEVGE…ETEAESEFDP (78 aa). The segment at 174–215 adopts a B box-type zinc-finger fold; it reads VAKRKCPDHGLDLSTYCQEDRQLICVLCPVIGAHRGHQLSTL. Zn(2+) is bound by residues Cys179, His182, Cys201, and His207. Residues 290–325 adopt a coiled-coil conformation; that stretch reads AHVTEILADIQSHMDRLMTQMAQAKEQLDTSNESAE. The interval 309–344 is disordered; the sequence is QMAQAKEQLDTSNESAEPKAEGDEEGPSGASEEEDT. Acidic residues predominate over residues 330-344; that stretch reads GDEEGPSGASEEEDT. Phosphoserine is present on residues Ser336 and Ser339.

As to quaternary structure, interacts (via coiled coil) with TRIM17 (via coiled coil).

Its function is as follows. May play a role in the process of differentiation and maturation of neuronal cells. May regulate the activity of TRIM17. Is a negative regulator of PAX6 expression. In Rattus norvegicus (Rat), this protein is Tripartite motif-containing protein 44 (Trim44).